Reading from the N-terminus, the 167-residue chain is Peptide deformylase (167 aa).

Fe cation is bound by residues cysteine 90 and histidine 132. The active site involves glutamate 133. Histidine 136 contributes to the Fe cation binding site.

The protein belongs to the polypeptide deformylase family. Requires Fe(2+) as cofactor.

It catalyses the reaction N-terminal N-formyl-L-methionyl-[peptide] + H2O = N-terminal L-methionyl-[peptide] + formate. Its function is as follows. Removes the formyl group from the N-terminal Met of newly synthesized proteins. Requires at least a dipeptide for an efficient rate of reaction. N-terminal L-methionine is a prerequisite for activity but the enzyme has broad specificity at other positions. The polypeptide is Peptide deformylase (Dehalococcoides mccartyi (strain CBDB1)).